The chain runs to 587 residues: MDKYLNSFVDHLSEWSSRAFRNNSSSANQSASNKELEQVFEQINAIVENHNNKLTTAFDKISYRVAHKITHLVESHSLVFNYATLVLIASALVVIGSFTSISSIPFTALPPTREHSLFDPTDFDVDHDCHVIYRENDEDKKKKKKSKRFFDMMDEKHAIILPLTSGCTLLALYFVIKKLHLNWLKYVVKILNFNITLLNIPAGTFVYSYFLNSLFRNLSHLASWNPLVVLPRYRVTIADDNEDLNKIGGFVTNLNYKDGLTNSVVHKKTLDEIEKDHWMKHFYRRELVEPKDIKSKRQISNMYLNSALIVSFVLSIVSTVYFYLSPNDWLISNAVSMNMAIWSIAQLKLKNLKSGALILIALFFYDICFVFGTDVMVTVATNLDIPVKLSLPVKFNTAQNNFNFSILGLGDIALPGMFIAMCYKYDIWKWHLDHDDTEFHFLNWSYVGKYFITAMVSYVASLVSAMVSLSIFNTAQPALLYIVPSLLISTILVACWNKDFKQFWNFQYDTIEVDKSLKKAIEKKENSITYSTFILSEYYNDADKYALLGDDVNENFDDDEEFVQEEDLSDSSEEELSEEDLLDDESS.

The Lumenal segment spans residues 1 to 85 (MDKYLNSFVD…HSLVFNYATL (85 aa)). Residues 86-106 (VLIASALVVIGSFTSISSIPF) form a helical membrane-spanning segment. Over 107-156 (TALPPTREHSLFDPTDFDVDHDCHVIYRENDEDKKKKKKSKRFFDMMDEK) the chain is Cytoplasmic. Residues 157–177 (HAIILPLTSGCTLLALYFVIK) traverse the membrane as a helical segment. At 178–192 (KLHLNWLKYVVKILN) the chain is on the lumenal side. A helical transmembrane segment spans residues 193–213 (FNITLLNIPAGTFVYSYFLNS). At 214–303 (LFRNLSHLAS…KSKRQISNMY (90 aa)) the chain is on the cytoplasmic side. The helical transmembrane segment at 304–324 (LNSALIVSFVLSIVSTVYFYL) threads the bilayer. Residues 325 to 328 (SPND) lie on the Lumenal side of the membrane. A helical membrane pass occupies residues 329 to 349 (WLISNAVSMNMAIWSIAQLKL). The Cytoplasmic segment spans residues 350–351 (KN). The chain crosses the membrane as a helical span at residues 352 to 372 (LKSGALILIALFFYDICFVFG). Residue D366 is part of the active site. The Lumenal segment spans residues 373–401 (TDVMVTVATNLDIPVKLSLPVKFNTAQNN). Residues 402–422 (FNFSILGLGDIALPGMFIAMC) form a helical membrane-spanning segment. D411 is a catalytic residue. Over 423 to 450 (YKYDIWKWHLDHDDTEFHFLNWSYVGKY) the chain is Cytoplasmic. Residues 451–471 (FITAMVSYVASLVSAMVSLSI) traverse the membrane as a helical segment. Residues 472–475 (FNTA) are Lumenal-facing. A helical membrane pass occupies residues 476–496 (QPALLYIVPSLLISTILVACW). The PAL motif lies at 477 to 479 (PAL). At 497–587 (NKDFKQFWNF…EEDLLDDESS (91 aa)) the chain is on the cytoplasmic side. The segment at 561–587 (EFVQEEDLSDSSEEELSEEDLLDDESS) is disordered.

This sequence belongs to the peptidase A22B family.

Its subcellular location is the membrane. The protein resides in the endoplasmic reticulum membrane. In terms of biological role, may act as intramembrane protease. In Saccharomyces cerevisiae (strain ATCC 204508 / S288c) (Baker's yeast), this protein is Probable intramembrane protease YKL100C.